We begin with the raw amino-acid sequence, 1945 residues long: Rho GTPase-activating protein 21 (1945 aa).

The disordered stretch occupies residues 26–53; sequence CEVSKNKDGKDQGEPVSPSEDEPFSWPG. A compositionally biased stretch (basic and acidic residues) spans 29-38; it reads SKNKDGKDQG. A phosphoserine mark is found at Ser42 and Ser63. One can recognise a PDZ domain in the interval 56 to 165; the sequence is TVMLKRTSQG…TLELSVMPKD (110 aa). Disordered stretches follow at residues 210 to 229 and 326 to 365; these read TAQPVETCPPDSLPNKQQTS and HQTTGSRSLEPSGILLKSGNYSGHSEGISSSRSQAVDSPP. Positions 347–358 are enriched in low complexity; it reads SGHSEGISSSRS. Ser454 bears the Phosphoserine mark. The segment covering 499 to 512 has biased composition (polar residues); sequence EATATVNSESQIPD. The segment at 499 to 519 is disordered; it reads EATATVNSESQIPDSNGERKQ. Arg549 and Arg569 each carry omega-N-methylarginine. Disordered regions lie at residues 573–647 and 674–702; these read PVSQ…RPVN and EVSSCLPGTSAKTSPQLSENLGTSDLELP. The segment covering 589 to 600 has biased composition (polar residues); sequence SNRNFPTTTGVS. Phosphoserine is present on residues Ser610 and Ser619. Residues 674 to 696 are compositionally biased toward polar residues; it reads EVSSCLPGTSAKTSPQLSENLGT. Thr741 carries the phosphothreonine modification. A phosphoserine mark is found at Ser851, Ser856, and Ser875. Disordered regions lie at residues 852 to 879 and 902 to 921; these read HDQESVGPPSLDGQHSSKTERSKSYDEG and ITDSQKSSEDSGSRKGSSSE. The span at 866 to 879 shows a compositional bias: basic and acidic residues; that stretch reads HSSKTERSKSYDEG. Position 876 is a phosphotyrosine (Tyr876). Phosphoserine is present on residues Ser918, Ser920, Ser948, Ser1093, and Ser1109. An interaction with ARF1 and ARF6 region spans residues 924-1091; it reads SDAAREGWLQ…AKSEPKTQSP (168 aa). Positions 925 to 1034 constitute a PH domain; sequence DAAREGWLQF…WIKTIQESSN (110 aa). The segment at 1080-1120 is disordered; it reads LGAKSEPKTQSPHSPKEESERKLLSKDDTSPPKDKGTWRRG. The span at 1093–1116 shows a compositional bias: basic and acidic residues; the sequence is SPKEESERKLLSKDDTSPPKDKGT. Residues 1141–1333 enclose the Rho-GAP domain; that stretch reads VRLDDCPPAH…TLIQHHDWFF (193 aa). Disordered regions lie at residues 1373-1396, 1412-1632, 1649-1794, and 1846-1945; these read PGDVSDSATSDSAKSKGSWGSGKD, SRKR…PVFP, ARVS…LGGH, and RTSA…ETPP. The span at 1377–1395 shows a compositional bias: low complexity; it reads SDSATSDSAKSKGSWGSGK. Residues Ser1412, Ser1426, and Ser1427 each carry the phosphoserine modification. Composition is skewed to basic and acidic residues over residues 1435 to 1457 and 1471 to 1488; these read FFKKENTEQSHSEIKEESKRESE and SNTKKDSGTTKEEKKIPW. Lys1438 participates in a covalent cross-link: Glycyl lysine isopeptide (Lys-Gly) (interchain with G-Cter in SUMO). Position 1504 is a phosphothreonine (Thr1504). Low complexity-rich tracts occupy residues 1531–1556 and 1569–1589; these read SDSGTLLSTSSQASLLRSSTKKSTSP and TTTSDYSTTSSTTYLTSLDSS. Residues 1579–1848 form an interaction with CTNNA1 region; that stretch reads STTYLTSLDS…WLARERVRTS (270 aa). A compositionally biased stretch (polar residues) spans 1590-1599; sequence RLSPEVQSVA. Positions 1611 to 1621 are enriched in basic and acidic residues; the sequence is SELVSEGRPVE. Position 1656 is a phosphoserine (Ser1656). Polar residues-rich tracts occupy residues 1658-1681 and 1729-1738; these read GSEASCTEGSLTPSLDSRRQQFSS and STGSLLTPSR. Thr1669 is subject to Phosphothreonine. Ser1729 carries the post-translational modification Phosphoserine. A compositionally biased stretch (basic and acidic residues) spans 1739-1757; that stretch reads SESEKQEATWKTKIADRLK. The segment covering 1782 to 1792 has biased composition (basic residues); the sequence is RKNIKRRHTLG. A compositionally biased stretch (polar residues) spans 1871–1882; the sequence is PISTHSPPSQQP. Positions 1887–1896 are enriched in low complexity; the sequence is AATSTLASTS. Thr1902 carries the phosphothreonine modification. Ser1906 carries the post-translational modification Phosphoserine. The span at 1907–1927 shows a compositional bias: polar residues; the sequence is PDQINRESFQNMSQNASSTAN. Basic and acidic residues predominate over residues 1932–1945; the sequence is KQSESPDTKAETPP.

Interacts with CTNNA1. Interacts with GTP-bound ARF1 and probably ARF6. In terms of processing, sumoylated with SUMO2 and SUMO3 in proliferating lymphocytes.

The protein localises to the golgi apparatus membrane. The protein resides in the cell junction. It localises to the cytoplasmic vesicle membrane. Its subcellular location is the cytoplasm. It is found in the cytoskeleton. In terms of biological role, functions as a GTPase-activating protein (GAP) for RHOA and CDC42. Downstream partner of ARF1 which may control Golgi apparatus structure and function. Also required for CTNNA1 recruitment to adherens junctions. This Mus musculus (Mouse) protein is Rho GTPase-activating protein 21.